The primary structure comprises 48 residues: uncharacterized protein (48 aa).

A helical transmembrane segment spans residues 20–37; the sequence is ILASPLFFANYVLHAAIH.

It is found in the membrane. This is an uncharacterized protein from Saccharomyces cerevisiae (strain ATCC 204508 / S288c) (Baker's yeast).